Reading from the N-terminus, the 410-residue chain is Elongation factor Tu, chloroplastic (410 aa).

The tr-type G domain occupies lysine 10–lysine 215. Residues glycine 19–threonine 26 form a G1 region. Residue glycine 19–threonine 26 coordinates GTP. A Mg(2+)-binding site is contributed by threonine 26. The interval glycine 61–asparagine 65 is G2. Residues aspartate 82–glycine 85 form a G3 region. Residues aspartate 82 to histidine 86 and asparagine 137 to aspartate 140 contribute to the GTP site. A G4 region spans residues asparagine 137 to aspartate 140. The interval serine 175 to leucine 177 is G5.

This sequence belongs to the TRAFAC class translation factor GTPase superfamily. Classic translation factor GTPase family. EF-Tu/EF-1A subfamily.

It is found in the plastid. It localises to the chloroplast. It carries out the reaction GTP + H2O = GDP + phosphate + H(+). Its function is as follows. GTP hydrolase that promotes the GTP-dependent binding of aminoacyl-tRNA to the A-site of ribosomes during protein biosynthesis. This chain is Elongation factor Tu, chloroplastic (tufA), found in Nephroselmis olivacea (Green alga).